Here is a 247-residue protein sequence, read N- to C-terminus: ATP synthase subunit a, chloroplastic (247 aa).

5 helical membrane passes run 38 to 58 (QVLI…IIAV), 95 to 115 (VPFI…GALL), 134 to 154 (INTT…AGLT), 199 to 219 (LVVV…VMFL), and 220 to 240 (GLFT…AYIG).

Belongs to the ATPase A chain family. As to quaternary structure, F-type ATPases have 2 components, CF(1) - the catalytic core - and CF(0) - the membrane proton channel. CF(1) has five subunits: alpha(3), beta(3), gamma(1), delta(1), epsilon(1). CF(0) has four main subunits: a, b, b' and c.

Its subcellular location is the plastid. It is found in the chloroplast thylakoid membrane. In terms of biological role, key component of the proton channel; it plays a direct role in the translocation of protons across the membrane. The sequence is that of ATP synthase subunit a, chloroplastic from Ranunculus macranthus (Large buttercup).